Consider the following 398-residue polypeptide: Phosphoglycerate kinase (398 aa).

Substrate is bound by residues 23 to 25, R38, 61 to 64, R122, and R155; these read DFN and HMGK. ATP-binding positions include K206, G297, E328, and 354–357; that span reads GGDS.

Belongs to the phosphoglycerate kinase family. In terms of assembly, monomer.

The protein resides in the cytoplasm. The enzyme catalyses (2R)-3-phosphoglycerate + ATP = (2R)-3-phospho-glyceroyl phosphate + ADP. It participates in carbohydrate degradation; glycolysis; pyruvate from D-glyceraldehyde 3-phosphate: step 2/5. This Clostridium botulinum (strain Okra / Type B1) protein is Phosphoglycerate kinase.